Consider the following 103-residue polypeptide: Acyl carrier protein (103 aa).

In terms of domain architecture, Carrier spans 14–89; that stretch reads NIVSNIVQDI…EFIDFTLQTI (76 aa). The residue at position 49 (serine 49) is an O-(pantetheine 4'-phosphoryl)serine.

It belongs to the acyl carrier protein (ACP) family. 4'-phosphopantetheine is transferred from CoA to a specific serine of apo-ACP by AcpS. This modification is essential for activity because fatty acids are bound in thioester linkage to the sulfhydryl of the prosthetic group.

Its subcellular location is the plastid. The protein resides in the cyanelle. The protein operates within lipid metabolism; fatty acid biosynthesis. Carrier of the growing fatty acid chain in fatty acid biosynthesis. The chain is Acyl carrier protein from Cyanophora paradoxa.